Reading from the N-terminus, the 480-residue chain is Citrate synthase 1, peroxisomal (480 aa).

Active-site residues include H321, H360, and D416.

The protein belongs to the citrate synthase family. In terms of tissue distribution, expressed only in siliques. Not expressed in flower, stem, cauline leaf, young leaf, mature leaf and senescent leaf.

The protein resides in the peroxisome. The catalysed reaction is oxaloacetate + acetyl-CoA + H2O = citrate + CoA + H(+). It participates in carbohydrate metabolism; tricarboxylic acid cycle; isocitrate from oxaloacetate: step 1/2. The chain is Citrate synthase 1, peroxisomal (CSY1) from Arabidopsis thaliana (Mouse-ear cress).